The following is a 301-amino-acid chain: UDP-N-acetylenolpyruvoylglucosamine reductase (301 aa).

Residues 26–193 (KTGGPAQYLA…VSATFGLEPG (168 aa)) enclose the FAD-binding PCMH-type domain. Residue Arg-172 is part of the active site. Ser-222 serves as the catalytic Proton donor. The active site involves Glu-292.

The protein belongs to the MurB family. The cofactor is FAD.

Its subcellular location is the cytoplasm. The catalysed reaction is UDP-N-acetyl-alpha-D-muramate + NADP(+) = UDP-N-acetyl-3-O-(1-carboxyvinyl)-alpha-D-glucosamine + NADPH + H(+). Its pathway is cell wall biogenesis; peptidoglycan biosynthesis. In terms of biological role, cell wall formation. The protein is UDP-N-acetylenolpyruvoylglucosamine reductase of Lactobacillus johnsonii (strain CNCM I-12250 / La1 / NCC 533).